The sequence spans 503 residues: uncharacterized protein (503 aa).

The stretch at 437–465 (LNKDLILENLIETENENDKQEFQKLLRTI) forms a coiled coil.

The protein belongs to the IIV-6 467R family.

This is an uncharacterized protein from Invertebrate iridescent virus 6 (IIV-6).